We begin with the raw amino-acid sequence, 661 residues long: DNA-directed RNA polymerase subunit beta' (661 aa).

Zn(2+) contacts are provided by C69, C71, C87, and C90. D489, D491, and D493 together coordinate Mg(2+).

This sequence belongs to the RNA polymerase beta' chain family. RpoC1 subfamily. In plastids the minimal PEP RNA polymerase catalytic core is composed of four subunits: alpha, beta, beta', and beta''. When a (nuclear-encoded) sigma factor is associated with the core the holoenzyme is formed, which can initiate transcription. Mg(2+) serves as cofactor. Requires Zn(2+) as cofactor.

It localises to the plastid. Its subcellular location is the chloroplast. The enzyme catalyses RNA(n) + a ribonucleoside 5'-triphosphate = RNA(n+1) + diphosphate. Functionally, DNA-dependent RNA polymerase catalyzes the transcription of DNA into RNA using the four ribonucleoside triphosphates as substrates. The polypeptide is DNA-directed RNA polymerase subunit beta' (Chaetosphaeridium globosum (Charophycean green alga)).